The following is a 395-amino-acid chain: PCI domain-containing protein 2 homolog (395 aa).

The PCI domain occupies 208–389 (ITYKYFVGRR…NKLVVSKQNP (182 aa)).

The protein belongs to the CSN12 family. In terms of assembly, component of the nuclear pore complex (NPC)-associated TREX-2/AMEX complex (anchoring and mRNA export complex), composed of e(y)2, xmas and PCID2. Interaction between the TREX-2/AMEX complex and the ORC complex is required for ORC localization to mRNPs, and consequently mRNA export. Within the TREX-2/AMEX-ORC complex, interacts with Orc3 and Orc4. Interacts with sbr/NXF1. Interacts with Moe. Interacts with nudC; required to maintain stability in the cytoplasm. Mono- and poly-ubiquitinated.

It is found in the nucleus. It localises to the cytoplasm. The protein resides in the nucleus membrane. Its subcellular location is the cytoskeleton. Required for the export of nuclear mRNAs and involved in mRNA trafficking in the cytoplasm. Component of the nuclear pore complex (NPC)-associated TREX-2/AMEX complex (anchoring and mRNA export complex) which functions in docking export-competent ribonucleoprotein particles (mRNPs) to the nuclear entrance of the nuclear pore complex (nuclear basket), thereby enabling the export of mRNAs to the cytoplasm through the nuclear pores. Within the complex, specifically promotes the association of factors involved in regulating nuclear mRNA export, such as Moe, sbr/NXF1 and the ORC complex, to the mRNPs particles. In the cytoplasm, functions independently of its role in the TREX-2/AMEX complex, to promote cytoplasmic mRNA trafficking together with nudC. Associates with translationally active polysomes. The chain is PCI domain-containing protein 2 homolog from Drosophila melanogaster (Fruit fly).